We begin with the raw amino-acid sequence, 216 residues long: Glycerol-3-phosphate acyltransferase (216 aa).

Transmembrane regions (helical) follow at residues 4 to 24, 71 to 91, 113 to 133, 144 to 164, and 165 to 185; these read TIIG…LWIG, LPFF…LAVI, VVLG…ASIL, VLSA…GFIL, and PSYD…IILR.

This sequence belongs to the PlsY family. Probably interacts with PlsX.

It localises to the cell membrane. It catalyses the reaction an acyl phosphate + sn-glycerol 3-phosphate = a 1-acyl-sn-glycero-3-phosphate + phosphate. Its pathway is lipid metabolism; phospholipid metabolism. Its function is as follows. Catalyzes the transfer of an acyl group from acyl-phosphate (acyl-PO(4)) to glycerol-3-phosphate (G3P) to form lysophosphatidic acid (LPA). This enzyme utilizes acyl-phosphate as fatty acyl donor, but not acyl-CoA or acyl-ACP. This is Glycerol-3-phosphate acyltransferase from Streptococcus sanguinis (strain SK36).